Reading from the N-terminus, the 426-residue chain is Gamma-glutamyl phosphate reductase (426 aa).

The protein belongs to the gamma-glutamyl phosphate reductase family.

It localises to the cytoplasm. The catalysed reaction is L-glutamate 5-semialdehyde + phosphate + NADP(+) = L-glutamyl 5-phosphate + NADPH + H(+). Its pathway is amino-acid biosynthesis; L-proline biosynthesis; L-glutamate 5-semialdehyde from L-glutamate: step 2/2. Catalyzes the NADPH-dependent reduction of L-glutamate 5-phosphate into L-glutamate 5-semialdehyde and phosphate. The product spontaneously undergoes cyclization to form 1-pyrroline-5-carboxylate. The polypeptide is Gamma-glutamyl phosphate reductase (Paracidovorax citrulli (strain AAC00-1) (Acidovorax citrulli)).